The following is a 2551-amino-acid chain: Piezo-type mechanosensitive ion channel component (2551 aa).

8 helical membrane-spanning segments follow: residues 5–25, 27–47, 56–76, 106–126, 204–226, 231–250, 256–276, and 320–340; these read YACMVLQRIVVPAVLVLAALM, PVGISFVYLLMFFVSPFVPLA, VTAFFIILLTLSTLVLLGHIT, FIDLQPFAIIEWLVPEVLVFA, IHFEGLVKISPLFCLATLFFAAV, VPGGFYFLIFLLSGTYWATC, GFALLLRCVMVVLVLHSLSIV, and LSLDSYLNPFALFFAYFALAL. The tract at residues 354–375 is disordered; sequence STRKARTPQPLESGSSVAPSVT. Residues 363 to 375 are compositionally biased toward polar residues; the sequence is PLESGSSVAPSVT. The next 9 helical transmembrane spans lie at 395-415, 424-444, 463-483, 516-536, 548-568, 588-608, 611-631, 639-659, and 695-715; these read TTTSILDQISYGFVSVGGFIY, ILMMAWSIVYHSWLTFVLLLS, PFIVLYAEALLIAQYIYGMDL, VPLIVKTAFVLMFWVTSRQFF, LADFIAPLQITVGSAGSSYLI, LLVRLWIWLLVLVIFLCAITG, MTGFRICYMALFLFFLLVFQS, IMYGFWLFLIFYAMSILILIY, and FLHLVSPTIIVILTVIQVHYF. The span at 731–741 shows a compositional bias: polar residues; that stretch reads GSAQQKPTETT. Residues 731-772 are disordered; it reads GSAQQKPTETTALEPAPSKRRGSAGSLRKSQGPSAEAAPGAT. A run of 12 helical transmembrane segments spans residues 819 to 839, 857 to 877, 910 to 930, 973 to 993, 994 to 1014, 1022 to 1042, 1071 to 1091, 1152 to 1172, 1174 to 1194, 1198 to 1218, 1239 to 1259, and 1275 to 1295; these read IAAFVCSVSEVCVLHIIFVGF, LISFIVTVIVLSKMIYQIEYL, LMSLLRTYIIYMVIVTMHAVI, LNFGFYKFGIEISLIALVSTI, TYRQDIVAVVYALWLVVLLLL, IWGVFQAFFAISILTQYIVLV, GALHFNHVPKLIFDFIVLVIL, VLCGFYWFTLAVVFLAGTNIA, LLALGYLIGAFIFLWQGSDFY, IHTIIFRWKWLLAFNVANILI, WLVHMLGITCTSNVLTEQIML, and ITHQVVLLWDTICFAFIIFQL. Disordered stretches follow at residues 1426-1521 and 1592-1658; these read NITE…AKDS and ESDE…PQQQ. A compositionally biased stretch (basic and acidic residues) spans 1430 to 1448; that stretch reads SEMKMQRRKTLYDKSKDAP. A compositionally biased stretch (low complexity) spans 1466-1477; it reads ATASSSASPAPT. The span at 1497–1511 shows a compositional bias: basic and acidic residues; the sequence is QTSKETSDSKSKMEV. Low complexity-rich tracts occupy residues 1621–1634 and 1644–1658; these read PTSTTLNTNTTTTP and LQPLQPNTTSTPQQQ. 4 consecutive transmembrane segments (helical) span residues 1718-1738, 1741-1761, 1770-1790, and 1817-1837; these read ISSWYALLANTDLICYIVVFI, VVNASLISLPLPIMVFLWGTL, FWVTLIAYTQAIVLIKCIFQF, and AHYAIYDLILLLVLFLHRYLL. Residues 1854 to 1876 form a disordered region; that stretch reads FTKPTASIDERDDSDNLSQPDSR. Transmembrane regions (helical) follow at residues 1937–1957, 1979–1999, 2008–2028, 2033–2053, 2075–2095, 2151–2171, and 2431–2451; these read ALMFLCDFVNFFVLLFGFTAF, IPFLIMLLVQFLLIVIDRALY, IIFHFFSVIGIHIWMFFVVPA, TFNSLAPPIIFYVIKCFYMLL, FSMVNMIAFKVYMQIPFLYEL, IMGGTIVLLIVICIWGPLCLF, and TFSFLTAGGIIGLYTTFVLLA. The tract at residues 2522–2551 is disordered; that stretch reads EYVDDDGDTDSIPSRMSVRRPEQLQPQQPQ.

The protein belongs to the PIEZO (TC 1.A.75) family.

It is found in the cell membrane. Its function is as follows. Component of a mechanosensitive channel required for rapidly adapting mechanically activated (MA) currents. Plays a major role in nociception (response to strong or painful touch). Required for maintaining the mechanosensitivity of tarsal bristle mechanosensors. During their evalulation of potential egg-laying sites, females determine the softest substrate for their eggs first by making a coarse evaluation of substrate hardness using mechanosensitive channels nan and Piezo in the leg tarsal bristles, followed by a much finer assessment using nan, iav and Tmc mechanosensitive channels on the labellum. Acts in the nompC- and nan-expressing neurons of the female leg tarsals, to sense the mild differences in egg-laying substrate stiffness. The sequence is that of Piezo-type mechanosensitive ion channel component from Drosophila melanogaster (Fruit fly).